A 168-amino-acid chain; its full sequence is uncharacterized protein (168 aa).

Positions Leu-19–Thr-80 constitute an HTH asnC-type domain. The segment at residues Leu-38 to Gln-57 is a DNA-binding region (H-T-H motif).

This is an uncharacterized protein from Haemophilus influenzae (strain ATCC 51907 / DSM 11121 / KW20 / Rd).